Here is a 114-residue protein sequence, read N- to C-terminus: Large ribosomal subunit protein bL19 (114 aa).

This sequence belongs to the bacterial ribosomal protein bL19 family.

In terms of biological role, this protein is located at the 30S-50S ribosomal subunit interface and may play a role in the structure and function of the aminoacyl-tRNA binding site. This is Large ribosomal subunit protein bL19 from Clavibacter sepedonicus (Clavibacter michiganensis subsp. sepedonicus).